We begin with the raw amino-acid sequence, 338 residues long: Phosphoribosylformylglycinamidine cyclo-ligase (338 aa).

Belongs to the AIR synthase family.

Its subcellular location is the cytoplasm. The catalysed reaction is 2-formamido-N(1)-(5-O-phospho-beta-D-ribosyl)acetamidine + ATP = 5-amino-1-(5-phospho-beta-D-ribosyl)imidazole + ADP + phosphate + H(+). It functions in the pathway purine metabolism; IMP biosynthesis via de novo pathway; 5-amino-1-(5-phospho-D-ribosyl)imidazole from N(2)-formyl-N(1)-(5-phospho-D-ribosyl)glycinamide: step 2/2. The chain is Phosphoribosylformylglycinamidine cyclo-ligase from Lactococcus lactis subsp. lactis (strain IL1403) (Streptococcus lactis).